A 119-amino-acid chain; its full sequence is Small ribosomal subunit protein bS16 (119 aa).

Basic residues predominate over residues 96-107 (RKKRRAYRQRRS). The segment at 96 to 119 (RKKRRAYRQRRSTQREEAAKDATK) is disordered. Positions 108-119 (TQREEAAKDATK) are enriched in basic and acidic residues.

Belongs to the bacterial ribosomal protein bS16 family.

This chain is Small ribosomal subunit protein bS16, found in Chlamydia pneumoniae (Chlamydophila pneumoniae).